The following is a 349-amino-acid chain: Isopentenyl-diphosphate delta-isomerase (349 aa).

6–7 provides a ligand contact to substrate; that stretch reads RK. Residues 62 to 64, serine 93, and asparagine 122 each bind FMN; that span reads AMT. A substrate-binding site is contributed by glutamine 152. Glutamate 153 contributes to the Mg(2+) binding site. FMN is bound by residues lysine 184, threonine 214, 258-259, and 280-281; these read GG and AG.

It belongs to the IPP isomerase type 2 family. Homooctamer. Dimer of tetramers. FMN serves as cofactor. The cofactor is NADPH. Mg(2+) is required as a cofactor.

The protein resides in the cytoplasm. It carries out the reaction isopentenyl diphosphate = dimethylallyl diphosphate. In terms of biological role, involved in the biosynthesis of isoprenoids. Catalyzes the 1,3-allylic rearrangement of the homoallylic substrate isopentenyl (IPP) to its allylic isomer, dimethylallyl diphosphate (DMAPP). The protein is Isopentenyl-diphosphate delta-isomerase of Bacillus cereus (strain AH820).